A 795-amino-acid chain; its full sequence is MKFSESWLREWVNPAVTTDELTHQITMAGLEVDDVLPVAGTFNGVKVGHVVECGQHPDADKLRVTKVDVGEEELLDIVCGAANCRQGLKVAVATVGAVLPGDFKIKKAKLRGQPSHGMLCSFTELGIDVESDGIMELAIDAPIGMDFRDFLALNDVTVDVDLTSNRADCFSIRGMAREVGVLNRADVTEPSVAPVAPSIDDTVAIEVKAPAACPRYLGRVVKNVNVQAKTPLWMQEKLRRCGIRSIDPVVDITNFVLLEQGQPMHAFDLAKIDGGIVVRLAEQGEKITLLDGSEAELNADTLVVADHNKALAIAGIFGGEESGVTSETKDVLLECAFFAPDHIRGRARSYGLHTDSSMRFERGVDYALQVSAMERATALLVEICGGEVAPVVAVESEAELPKPNKVALRRTKLDNLLGHHIADSDVVEILERLGMTVETTAEGWVAVAPTWRFDIAIEQDLVEEVGRIYGYDNIPNQNPAAALKMHDHQEANIPLKRVRDLLVDRGYHEAITYSFVEPEQQKLVVPGVDALILPNPISAEMSAMRLGLIQGLLNTVVHNQKRQQPRVRLFEYGLRFIPCDTAENGMRQEPMLAGVIAGTRSEEHWNIDTNTVDFFDLKGDVEAILELSANDKAYSFVAAKHPALHPGQSAAIVVDGKEIGVIGTVHPELERKFGLNGRTIVFEIEWSAINRKVIPEAVALSKFPANRRDIAVVVDEAVASGDIVNACLEVGGEFLKAAKLFDVYVGKGVEEGKKSLAIALTLQSNERTLEDADIAGAVDAIVTHVSEKFGASLRD.

One can recognise a tRNA-binding domain in the interval 39–148 (AGTFNGVKVG…IDAPIGMDFR (110 aa)). The 76-residue stretch at 401–476 (PKPNKVALRR…RIYGYDNIPN (76 aa)) folds into the B5 domain. 4 residues coordinate Mg(2+): aspartate 454, aspartate 460, glutamate 463, and glutamate 464. The FDX-ACB domain maps to 701–794 (SKFPANRRDI…VSEKFGASLR (94 aa)).

The protein belongs to the phenylalanyl-tRNA synthetase beta subunit family. Type 1 subfamily. Tetramer of two alpha and two beta subunits. It depends on Mg(2+) as a cofactor.

The protein localises to the cytoplasm. The enzyme catalyses tRNA(Phe) + L-phenylalanine + ATP = L-phenylalanyl-tRNA(Phe) + AMP + diphosphate + H(+). The polypeptide is Phenylalanine--tRNA ligase beta subunit (Vibrio vulnificus (strain CMCP6)).